Here is a 419-residue protein sequence, read N- to C-terminus: Transcription termination factor Rho (419 aa).

The Rho RNA-BD domain maps to 48-123 (DIFGDGVLEI…LKVNEVNFDK (76 aa)). RNA-binding regions lie at residues 61–66 (GFGFLR), 78–80 (DIY), and 108–110 (ERY). ATP-binding positions include 169–174 (GRGQRG), 181–186 (KAGKTM), and arginine 212. The tract at residues 284 to 288 (VLTGG) is RNA-binding 2.

The protein belongs to the Rho family. Homohexamer. The homohexamer assembles into an open ring structure.

Facilitates transcription termination by a mechanism that involves Rho binding to the nascent RNA, activation of Rho's RNA-dependent ATPase activity, and release of the mRNA from the DNA template. This chain is Transcription termination factor Rho, found in Escherichia coli O157:H7.